Reading from the N-terminus, the 323-residue chain is Elongation factor P--(R)-beta-lysine ligase (323 aa).

Residue 76 to 78 coordinates substrate; the sequence is SPE. Residues 100–102 and Asn-109 each bind ATP; that span reads RNE. Tyr-118 is a binding site for substrate. 242–243 is a binding site for ATP; sequence EL. Residue Glu-249 participates in substrate binding. Residue Gly-298 coordinates ATP.

The protein belongs to the class-II aminoacyl-tRNA synthetase family. EpmA subfamily. As to quaternary structure, homodimer.

The catalysed reaction is D-beta-lysine + L-lysyl-[protein] + ATP = N(6)-((3R)-3,6-diaminohexanoyl)-L-lysyl-[protein] + AMP + diphosphate + H(+). With EpmB is involved in the beta-lysylation step of the post-translational modification of translation elongation factor P (EF-P). Catalyzes the ATP-dependent activation of (R)-beta-lysine produced by EpmB, forming a lysyl-adenylate, from which the beta-lysyl moiety is then transferred to the epsilon-amino group of a conserved specific lysine residue in EF-P. This Mannheimia succiniciproducens (strain KCTC 0769BP / MBEL55E) protein is Elongation factor P--(R)-beta-lysine ligase.